The sequence spans 361 residues: Chorismate synthase (361 aa).

NADP(+) is bound by residues arginine 48 and arginine 54. Residues 125-127 (RSS), 238-239 (NA), glycine 278, 293-297 (KPTSS), and arginine 319 each bind FMN.

The protein belongs to the chorismate synthase family. Homotetramer. It depends on FMNH2 as a cofactor.

It carries out the reaction 5-O-(1-carboxyvinyl)-3-phosphoshikimate = chorismate + phosphate. It functions in the pathway metabolic intermediate biosynthesis; chorismate biosynthesis; chorismate from D-erythrose 4-phosphate and phosphoenolpyruvate: step 7/7. Catalyzes the anti-1,4-elimination of the C-3 phosphate and the C-6 proR hydrogen from 5-enolpyruvylshikimate-3-phosphate (EPSP) to yield chorismate, which is the branch point compound that serves as the starting substrate for the three terminal pathways of aromatic amino acid biosynthesis. This reaction introduces a second double bond into the aromatic ring system. This Edwardsiella ictaluri (strain 93-146) protein is Chorismate synthase.